The following is a 64-amino-acid chain: Prokaryotic ubiquitin-like protein Pup (64 aa).

Over residues 1–10 (MNQNGSQIHS) the composition is skewed to polar residues. Positions 1–32 (MNQNGSQIHSDGNGHSDDTDTPGVSAGQVSVN) are disordered. The segment at 20 to 58 (DTPGVSAGQVSVNTAGVDDLLDEIDGLLESNAEEFVRSY) is ARC ATPase binding. A Deamidated glutamine modification is found at Q64. Q64 is covalently cross-linked (Isoglutamyl lysine isopeptide (Gln-Lys) (interchain with K-? in acceptor proteins)).

Belongs to the prokaryotic ubiquitin-like protein family. Strongly interacts with the proteasome-associated ATPase ARC through a hydrophobic interface; the interacting region of Pup lies in its C-terminal half. There is one Pup binding site per ARC hexamer ring. In terms of processing, is modified by deamidation of its C-terminal glutamine to glutamate by the deamidase Dop, a prerequisite to the subsequent pupylation process.

The protein operates within protein degradation; proteasomal Pup-dependent pathway. Its function is as follows. Protein modifier that is covalently attached to lysine residues of substrate proteins, thereby targeting them for proteasomal degradation. The tagging system is termed pupylation. The sequence is that of Prokaryotic ubiquitin-like protein Pup from Corynebacterium diphtheriae (strain ATCC 700971 / NCTC 13129 / Biotype gravis).